The sequence spans 367 residues: Pectate trisaccharide-lyase (367 aa).

An N-terminal signal peptide occupies residues 1–27 (MLMRFSRVVSLVLLLVFTAVLTGAVKA). Asp-144, Asp-166, and Asp-170 together coordinate Ca(2+). The stretch at 151–173 (SHHIWIDHCTFVNGNDGAVDIKK) is one PbH1 1 repeat. Residue Arg-224 is part of the active site. The PbH1 2 repeat unit spans residues 263-289 (GAKVHVEGNYFMGYGAVMAEAGIAFLP).

The protein belongs to the polysaccharide lyase 1 family. In terms of assembly, homotetramer. Requires Ca(2+) as cofactor.

It localises to the secreted. The catalysed reaction is eliminative cleavage of unsaturated trigalacturonate as the major product from the reducing end of polygalacturonic acid/pectate.. Its activity is regulated as follows. Completely inactivated by EGTA. In terms of biological role, cleaves unsaturated trigalacturonate from pectin. Activity is highest towards polygalacturonic acid, activity on methylated pectins decreases with an increasing degree of methylation. This chain is Pectate trisaccharide-lyase, found in Thermotoga maritima (strain ATCC 43589 / DSM 3109 / JCM 10099 / NBRC 100826 / MSB8).